The following is a 367-amino-acid chain: Aflatoxin B1 aldehyde reductase member 2 (367 aa).

The N-terminal 46 residues, 1–46 (MLRAVSRAVSRAAVRCAWRSGPSVARPLAMSRSPAPRAVSGAPLRP), are a transit peptide targeting the mitochondrion. The disordered stretch occupies residues 27–46 (PLAMSRSPAPRAVSGAPLRP). Ser-40 is modified (phosphoserine). Position 48 is a phosphothreonine (Thr-48). Asp-80 is an NADP(+) binding site. Tyr-85 acts as the Proton donor in catalysis. Position 136 is an N6-acetyllysine (Lys-136). Residue His-149 coordinates substrate. NADP(+) is bound by residues 179–180 (SN), Gln-205, 234–244 (NPLAGGLLTGK), and Arg-258. At Lys-244 the chain carries N6-succinyllysine. At Ser-263 the chain carries Phosphoserine. Residues Tyr-268 and Arg-271 each coordinate substrate. 326-334 (SSLEQLEQN) contacts NADP(+). A substrate-binding site is contributed by Arg-367.

The protein belongs to the aldo/keto reductase family. Aldo/keto reductase 2 subfamily. Homodimer. Heterodimer with AKR7A1.

Its subcellular location is the mitochondrion. It is found in the golgi apparatus. It localises to the golgi stack. The protein resides in the cytoplasm. The catalysed reaction is 4-hydroxybutanoate + NADP(+) = succinate semialdehyde + NADPH + H(+). Functionally, catalyzes the NADPH-dependent reduction of succinic semialdehyde to gamma-hydroxybutyrate. May have an important role in producing the neuromodulator gamma-hydroxybutyrate (GHB). Has broad substrate specificity. Can reduce the dialdehyde protein-binding form of aflatoxin B1 (AFB1) to the non-binding AFB1 dialcohol. Acts as a 2-carboxybenzaldehyde reductase. In Rattus norvegicus (Rat), this protein is Aflatoxin B1 aldehyde reductase member 2 (Akr7a2).